We begin with the raw amino-acid sequence, 165 residues long: Phosphopantetheine adenylyltransferase (165 aa).

S10 serves as a coordination point for substrate. ATP is bound by residues 10–11 (SF) and H18. K42, T79, and R93 together coordinate substrate. ATP is bound by residues 94–96 (GLR), E104, and 129–135 (VRPITAT).

It belongs to the bacterial CoaD family. In terms of assembly, homohexamer. The cofactor is Mg(2+).

It is found in the cytoplasm. It catalyses the reaction (R)-4'-phosphopantetheine + ATP + H(+) = 3'-dephospho-CoA + diphosphate. The protein operates within cofactor biosynthesis; coenzyme A biosynthesis; CoA from (R)-pantothenate: step 4/5. Reversibly transfers an adenylyl group from ATP to 4'-phosphopantetheine, yielding dephospho-CoA (dPCoA) and pyrophosphate. This Rhodopseudomonas palustris (strain BisB5) protein is Phosphopantetheine adenylyltransferase.